A 147-amino-acid polypeptide reads, in one-letter code: HTH-type transcriptional regulator MntR (147 aa).

Positions 1-63 constitute an HTH dtxR-type domain; the sequence is MPTPSMEDYI…YEKYRGFVLT (63 aa). Residues D8, E11, H77, E99, E102, and H103 each contribute to the Mn(2+) site.

The protein belongs to the DtxR/MntR family. In terms of assembly, homodimer.

It is found in the cytoplasm. With respect to regulation, DNA binding is strongly activated by Mn(2+). Its function is as follows. Central regulator of manganese homeostasis. In Oceanobacillus iheyensis (strain DSM 14371 / CIP 107618 / JCM 11309 / KCTC 3954 / HTE831), this protein is HTH-type transcriptional regulator MntR.